Consider the following 59-residue polypeptide: Large ribosomal subunit protein bL32 (59 aa).

Residues 1–20 (MAVPRNRHSNARKNIRRSHH) are disordered.

This sequence belongs to the bacterial ribosomal protein bL32 family.

This chain is Large ribosomal subunit protein bL32, found in Chlamydia trachomatis serovar A (strain ATCC VR-571B / DSM 19440 / HAR-13).